A 346-amino-acid polypeptide reads, in one-letter code: tRNA N6-adenosine threonylcarbamoyltransferase (346 aa).

Residues His-117 and His-121 each coordinate Fe cation. Substrate contacts are provided by residues 139 to 143, Asp-172, Gly-185, Asp-189, and Asn-278; that span reads VVSGG. Position 307 (Asp-307) interacts with Fe cation.

This sequence belongs to the KAE1 / TsaD family. In terms of assembly, may form a heterodimer with TsaB. The cofactor is Fe(2+).

It is found in the cytoplasm. It catalyses the reaction L-threonylcarbamoyladenylate + adenosine(37) in tRNA = N(6)-L-threonylcarbamoyladenosine(37) in tRNA + AMP + H(+). Its function is as follows. Required for the formation of a threonylcarbamoyl group on adenosine at position 37 (t(6)A37) in tRNAs that read codons beginning with adenine. Is involved in the transfer of the threonylcarbamoyl moiety of threonylcarbamoyl-AMP (TC-AMP) to the N6 group of A37, together with TsaE and TsaB; this reaction does not require ATP in vitro. TsaD likely plays a direct catalytic role in this reaction. In Bacillus subtilis (strain 168), this protein is tRNA N6-adenosine threonylcarbamoyltransferase.